Consider the following 202-residue polypeptide: Imidazoleglycerol-phosphate dehydratase (202 aa).

This sequence belongs to the imidazoleglycerol-phosphate dehydratase family. Homotrimer.

It catalyses the reaction D-erythro-1-(imidazol-4-yl)glycerol 3-phosphate = 3-(imidazol-4-yl)-2-oxopropyl phosphate + H2O. Its pathway is amino-acid biosynthesis; L-histidine biosynthesis; L-histidine from 5-phospho-alpha-D-ribose 1-diphosphate: step 6/9. This chain is Imidazoleglycerol-phosphate dehydratase (HIS3), found in Cryptococcus neoformans var. neoformans serotype D (strain B-3501A) (Filobasidiella neoformans).